A 261-amino-acid polypeptide reads, in one-letter code: Follistatin-related protein 3 (261 aa).

Residues 1–26 (MRPRAPGPLWPLPWGALAWAVGFVGS) form the signal peptide. The region spanning 36–107 (GVCWLQQGRE…SCEGVECGPG (72 aa)) is the TB domain. 8 disulfides stabilise this stretch: Cys-38–Cys-61, Cys-48–Cys-92, Cys-62–Cys-95, Cys-99–Cys-110, Cys-104–Cys-119, Cys-121–Cys-153, Cys-125–Cys-146, and Cys-135–Cys-167. Asn-73 carries an N-linked (GlcNAc...) asparagine glycan. The Follistatin-like 1 domain occupies 99–119 (CEGVECGPGKACRMLGGRPRC). 2 consecutive Kazal-like domains span residues 113 to 169 (LGGR…RCRK) and 189 to 245 (SAHC…SCAG). The 24-residue stretch at 170-193 (SCAHVVCLRPQSCVVDQTGSAHCV) folds into the Follistatin-like 2 domain. Cystine bridges form between Cys-195/Cys-229, Cys-200/Cys-222, and Cys-211/Cys-243. Asn-215 carries N-linked (GlcNAc...) asparagine glycosylation. Residues 242-261 (SCAGTPEPLDPESEEEENFV) are disordered. Acidic residues predominate over residues 250-261 (LDPESEEEENFV).

As to quaternary structure, interacts with INHBA and INHBB. Interacts with FN1. Interacts with ADAM12. Interacts with MLLT10; the interaction enhances MLLT10 in vitro transcriptional activity and self-association. Interacts with MSTN.

The protein localises to the secreted. It localises to the nucleus. In terms of biological role, the secreted form is a binding and antagonizing protein for members of the TGF-beta family, such as activin, BMP2 and MSTN. Inhibits activin A-, activin B-, BMP2- and MSDT-induced cellular signaling; more effective on activin A than on activin B. Involved in bone formation; inhibits osteoclast differentiation. Involved in hematopoiesis; involved in differentiation of hemopoietic progenitor cells, increases hematopoietic cell adhesion to fibronectin and seems to contribute to the adhesion of hematopoietic precursor cells to the bone marrow stroma. The nuclear form is probably involved in transcriptional regulation via interaction with MLLT10. The sequence is that of Follistatin-related protein 3 (FSTL3) from Bos taurus (Bovine).